The chain runs to 126 residues: Histone H2B type 1-D (126 aa).

The segment covering 1–12 has biased composition (low complexity); it reads MPEPTKSAPAPK. The segment at 1 to 36 is disordered; it reads MPEPTKSAPAPKKGSKKAVTKAQKKDGKKRKRSRKE. Pro-2 is subject to N-acetylproline. An ADP-ribosyl glutamic acid modification is found at Glu-3. Lys-6 carries the N6-(2-hydroxyisobutyryl)lysine; alternate modification. The residue at position 6 (Lys-6) is an N6-(beta-hydroxybutyryl)lysine; alternate. Position 6 is an N6-acetyllysine; alternate (Lys-6). The residue at position 6 (Lys-6) is an N6-butyryllysine; alternate. The residue at position 6 (Lys-6) is an N6-crotonyllysine; alternate. Lys-6 is modified (N6-lactoyllysine; alternate). Lys-6 is covalently cross-linked (Glycyl lysine isopeptide (Lys-Gly) (interchain with G-Cter in SUMO2); alternate). Residue Ser-7 is modified to ADP-ribosylserine. The residue at position 12 (Lys-12) is an N6-(beta-hydroxybutyryl)lysine; alternate. N6-acetyllysine; alternate occurs at positions 12 and 13. Lys-12 and Lys-13 each carry N6-crotonyllysine; alternate. An N6-lactoyllysine; alternate modification is found at Lys-12. Lys-13 is modified (N6-(2-hydroxyisobutyryl)lysine; alternate). Residue Ser-15 is modified to Phosphoserine; by STK4/MST1. Lys-16, Lys-17, Lys-21, and Lys-24 each carry N6-acetyllysine; alternate. Lys-16, Lys-17, Lys-21, and Lys-24 each carry N6-crotonyllysine; alternate. An N6-lactoyllysine; alternate mark is found at Lys-16, Lys-17, Lys-21, and Lys-24. N6-(beta-hydroxybutyryl)lysine; alternate is present on residues Lys-17 and Lys-21. Position 17 is an N6-glutaryllysine; alternate (Lys-17). An N6-(2-hydroxyisobutyryl)lysine; alternate mark is found at Lys-21 and Lys-24. Residue Lys-21 is modified to N6-butyryllysine; alternate. A Glycyl lysine isopeptide (Lys-Gly) (interchain with G-Cter in SUMO2); alternate cross-link involves residue Lys-21. At Lys-25 the chain carries N6-(2-hydroxyisobutyryl)lysine. Lys-35 bears the N6-(2-hydroxyisobutyryl)lysine; alternate mark. The residue at position 35 (Lys-35) is an N6-(beta-hydroxybutyryl)lysine; alternate. Residue Lys-35 is modified to N6-crotonyllysine; alternate. Position 35 is an N6-glutaryllysine; alternate (Lys-35). Position 35 is an N6-succinyllysine; alternate (Lys-35). A Glycyl lysine isopeptide (Lys-Gly) (interchain with G-Cter in ubiquitin); alternate cross-link involves residue Lys-35. At Glu-36 the chain carries PolyADP-ribosyl glutamic acid. Ser-37 carries the post-translational modification Phosphoserine; by AMPK. Lys-44, Lys-47, and Lys-58 each carry N6-(2-hydroxyisobutyryl)lysine; alternate. The residue at position 44 (Lys-44) is an N6-lactoyllysine; alternate. 2 positions are modified to N6-glutaryllysine; alternate: Lys-44 and Lys-47. Lys-47 is subject to N6-methyllysine; alternate. Lys-58 is subject to N6,N6-dimethyllysine; alternate. At Arg-80 the chain carries Dimethylated arginine. N6-(2-hydroxyisobutyryl)lysine; alternate is present on Lys-86. Residue Lys-86 is modified to N6-(beta-hydroxybutyryl)lysine; alternate. Lys-86 bears the N6-acetyllysine; alternate mark. N6-lactoyllysine; alternate is present on Lys-86. Lys-86 is modified (N6,N6,N6-trimethyllysine; alternate). An omega-N-methylarginine mark is found at Arg-87 and Arg-93. Lys-109 is modified (N6-(2-hydroxyisobutyryl)lysine; alternate). N6-lactoyllysine; alternate is present on Lys-109. Lys-109 carries the N6-glutaryllysine; alternate modification. N6-methyllysine; alternate is present on Lys-109. Ser-113 is a glycosylation site (O-linked (GlcNAc) serine). Thr-116 carries the phosphothreonine modification. Lys-117 and Lys-121 each carry N6-(2-hydroxyisobutyryl)lysine; alternate. Lys-117 and Lys-121 each carry N6-(beta-hydroxybutyryl)lysine; alternate. N6-lactoyllysine; alternate occurs at positions 117 and 121. Lys-117 and Lys-121 each carry N6-glutaryllysine; alternate. N6-succinyllysine; alternate occurs at positions 117 and 121. Lys-117 carries the N6-malonyllysine; alternate modification. Residue Lys-117 is modified to N6-methylated lysine; alternate. Residue Lys-121 forms a Glycyl lysine isopeptide (Lys-Gly) (interchain with G-Cter in ubiquitin); alternate linkage.

Belongs to the histone H2B family. As to quaternary structure, the nucleosome is a histone octamer containing two molecules each of H2A, H2B, H3 and H4 assembled in one H3-H4 heterotetramer and two H2A-H2B heterodimers. The octamer wraps approximately 147 bp of DNA. In terms of processing, monoubiquitination at Lys-35 (H2BK34Ub) by the MSL1/MSL2 dimer is required for histone H3 'Lys-4' (H3K4me) and 'Lys-79' (H3K79me) methylation and transcription activation at specific gene loci, such as HOXA9 and MEIS1 loci. Similarly, monoubiquitination at Lys-121 (H2BK120Ub) by the RNF20/40 complex gives a specific tag for epigenetic transcriptional activation and is also prerequisite for histone H3 'Lys-4' and 'Lys-79' methylation. It also functions cooperatively with the FACT dimer to stimulate elongation by RNA polymerase II. H2BK120Ub also acts as a regulator of mRNA splicing: deubiquitination by USP49 is required for efficient cotranscriptional splicing of a large set of exons. Phosphorylation at Ser-37 (H2BS36ph) by AMPK in response to stress promotes transcription. Phosphorylated on Ser-15 (H2BS14ph) by STK4/MST1 during apoptosis; which facilitates apoptotic chromatin condensation. Also phosphorylated on Ser-15 in response to DNA double strand breaks (DSBs), and in correlation with somatic hypermutation and immunoglobulin class-switch recombination. Post-translationally, glcNAcylation at Ser-113 promotes monoubiquitination of Lys-121. It fluctuates in response to extracellular glucose, and associates with transcribed genes. In terms of processing, ADP-ribosylated by PARP1 or PARP2 on Ser-7 (H2BS6ADPr) in response to DNA damage. H2BS6ADPr promotes recruitment of CHD1L. Mono-ADP-ribosylated on Glu-3 (H2BE2ADPr) by PARP3 in response to single-strand breaks. Poly ADP-ribosylation on Glu-36 (H2BE35ADPr) by PARP1 regulates adipogenesis: it inhibits phosphorylation at Ser-37 (H2BS36ph), thereby blocking expression of pro-adipogenetic genes. Crotonylation (Kcr) is specifically present in male germ cells and marks testis-specific genes in post-meiotic cells, including X-linked genes that escape sex chromosome inactivation in haploid cells. Crotonylation marks active promoters and enhancers and confers resistance to transcriptional repressors. It is also associated with post-meiotically activated genes on autosomes. Post-translationally, lactylated in macrophages by EP300/P300 by using lactoyl-CoA directly derived from endogenous or exogenous lactate, leading to stimulates gene transcription.

The protein resides in the nucleus. The protein localises to the chromosome. Functionally, core component of nucleosome. Nucleosomes wrap and compact DNA into chromatin, limiting DNA accessibility to the cellular machineries which require DNA as a template. Histones thereby play a central role in transcription regulation, DNA repair, DNA replication and chromosomal stability. DNA accessibility is regulated via a complex set of post-translational modifications of histones, also called histone code, and nucleosome remodeling. The polypeptide is Histone H2B type 1-D (Homo sapiens (Human)).